Reading from the N-terminus, the 118-residue chain is Large ribosomal subunit protein bL20 (118 aa).

This sequence belongs to the bacterial ribosomal protein bL20 family.

Binds directly to 23S ribosomal RNA and is necessary for the in vitro assembly process of the 50S ribosomal subunit. It is not involved in the protein synthesizing functions of that subunit. The polypeptide is Large ribosomal subunit protein bL20 (Syntrophotalea carbinolica (strain DSM 2380 / NBRC 103641 / GraBd1) (Pelobacter carbinolicus)).